The sequence spans 622 residues: Palmitoyltransferase pfa3 (622 aa).

Residues 1-38 lie on the Cytoplasmic side of the membrane; that stretch reads MDATPYTTSSTSTALDSPSSLSATMARRWARKLERYCC. A helical membrane pass occupies residues 39-59; it reads TCVTYFPLAFVYSMTSWAAYV. At 60–76 the chain is on the vacuolar side; sequence DVSLSTTPSRVTWLGHS. Residues 77 to 97 form a helical membrane-spanning segment; the sequence is YGFIAVVLYLLANWCYTYAVF. Over 98 to 175 the chain is Cytoplasmic; it reads TSPGSTTNEY…ATCVGLRNHK (78 aa). The region spanning 132–182 is the DHHC domain; that stretch reads RFCKKCQARKPDRAHHCSTCRRCVLKMDHHCPWLATCVGLRNHKAFLLFLI. Residues 176–196 traverse the membrane as a helical segment; the sequence is AFLLFLIYTSVFCWVSFAGSA. The Vacuolar segment spans residues 197–217; that stretch reads SWVWEEIMSNTTYVETLMPVN. The helical transmembrane segment at 218 to 238 threads the bilayer; that stretch reads YIMLSVISGIIGIVLSAFCGW. Residues 239–622 are Cytoplasmic-facing; it reads HIYLASRGQT…EGRSNDDGVD (384 aa). Disordered stretches follow at residues 298 to 334, 419 to 507, and 533 to 622; these read PGVT…ELQA, REEQ…YADD, and DDVL…DGVD. Basic and acidic residues predominate over residues 302-311; sequence RPEEGEEMRR. Residues 313 to 330 show a composition bias toward polar residues; sequence TTPSGSSQRNDLASQHNP. Residues 419 to 428 show a composition bias toward basic and acidic residues; that stretch reads REEQRQRERQ. The span at 443–455 shows a compositional bias: polar residues; the sequence is YTPTWTPPNQQHP. Low complexity predominate over residues 466-488; the sequence is PSSQPQTQRNSNSSSPSFTPSRR. The span at 533–547 shows a compositional bias: acidic residues; the sequence is DDVLNDDDDDDEDYF. Residues 610–622 show a composition bias toward basic and acidic residues; the sequence is NGEEGRSNDDGVD.

Belongs to the DHHC palmitoyltransferase family. PFA3 subfamily. In terms of processing, autopalmitoylated.

Its subcellular location is the vacuole membrane. It carries out the reaction L-cysteinyl-[protein] + hexadecanoyl-CoA = S-hexadecanoyl-L-cysteinyl-[protein] + CoA. In terms of biological role, palmitoyltransferase specific for vac8. Palmitoylates vac8 at one or more of its N-terminal cysteine residues, which is required for its proper membrane localization. The chain is Palmitoyltransferase pfa3 (ptr-3) from Neurospora crassa (strain ATCC 24698 / 74-OR23-1A / CBS 708.71 / DSM 1257 / FGSC 987).